The sequence spans 647 residues: Probable squalene--hopene cyclase (647 aa).

One copy of the PFTB 1 repeat lies at 67–108 (EAKIGNYLRRTQGAHGGWPLVHDGPFDMSASVKSYFALKMIG). The active-site Proton donor is the Asp388. PFTB repeat units follow at residues 413-454 (IARG…GALL) and 530-577 (IRKA…ALLG).

This sequence belongs to the terpene cyclase/mutase family.

It carries out the reaction squalene = hop-22(29)-ene. It catalyses the reaction squalene + H2O = hopan-22-ol. Its pathway is secondary metabolite biosynthesis; hopanoid biosynthesis. Functionally, catalyzes the cyclization of squalene into hopene. Probably part of an operon y4aABCD involved in the synthesis of an isoprenoid compound. This chain is Probable squalene--hopene cyclase (shc), found in Sinorhizobium fredii (strain NBRC 101917 / NGR234).